The chain runs to 160 residues: H/ACA ribonucleoprotein complex subunit 2 (160 aa).

Ser15 carries the phosphoserine modification. A Phosphothreonine modification is found at Thr23.

This sequence belongs to the eukaryotic ribosomal protein eL8 family. Component of the box H/ACA small nucleolar ribonucleoprotein (H/ACA snoRNP) complex consisting of Nop60B, Gar1, NPH2 and Nop10, and associated with H/ACA-type snoRNAs.

It is found in the nucleus. It localises to the nucleolus. Component of the box H/ACA small nucleolar ribonucleoprotein (H/ACA snoRNP) complex, which catalyzes pseudouridylation of rRNA. This involves the isomerization of uridine such that the ribose is subsequently attached to C5, instead of the normal N1. Pseudouridine ('psi') residues may serve to stabilize the conformation of rRNAs. Required for ribosome biogenesis. H/ACA snoRNP complex-dependent ribosome biogenesis is important in female germline cell differentiation during oogenesis. In Drosophila melanogaster (Fruit fly), this protein is H/ACA ribonucleoprotein complex subunit 2.